The sequence spans 419 residues: Elongation factor Tu, chloroplastic (419 aa).

The tr-type G domain occupies 10-214 (KPHVNIGTIG…AVDSYIPTPK (205 aa)). A G1 region spans residues 19–26 (GHVDHGKT). 19–26 (GHVDHGKT) provides a ligand contact to GTP. A Mg(2+)-binding site is contributed by Thr26. Positions 60-64 (GITIN) are G2. Positions 81–84 (DCPG) are G3. Residues 81 to 85 (DCPGH) and 136 to 139 (NKED) contribute to the GTP site. Residues 136–139 (NKED) are G4. Positions 174–176 (SAL) are G5.

The protein belongs to the TRAFAC class translation factor GTPase superfamily. Classic translation factor GTPase family. EF-Tu/EF-1A subfamily.

Its subcellular location is the plastid. It localises to the chloroplast. The enzyme catalyses GTP + H2O = GDP + phosphate + H(+). Functionally, GTP hydrolase that promotes the GTP-dependent binding of aminoacyl-tRNA to the A-site of ribosomes during protein biosynthesis. The polypeptide is Elongation factor Tu, chloroplastic (tufA) (Chara vulgaris (Common stonewort)).